The sequence spans 379 residues: Cobalt-precorrin-5B C(1)-methyltransferase (379 aa).

It belongs to the CbiD family.

It catalyses the reaction Co-precorrin-5B + S-adenosyl-L-methionine = Co-precorrin-6A + S-adenosyl-L-homocysteine. Its pathway is cofactor biosynthesis; adenosylcobalamin biosynthesis; cob(II)yrinate a,c-diamide from sirohydrochlorin (anaerobic route): step 6/10. Functionally, catalyzes the methylation of C-1 in cobalt-precorrin-5B to form cobalt-precorrin-6A. This chain is Cobalt-precorrin-5B C(1)-methyltransferase, found in Cyanothece sp. (strain PCC 7425 / ATCC 29141).